The sequence spans 521 residues: MAP kinase-activated protein kinase mak-1 (521 aa).

A compositionally biased stretch (acidic residues) spans 1-12; that stretch reads MMFEYEEDEDPM. The segment at 1–36 is disordered; it reads MMFEYEEDEDPMEQQKHEEFKHHSTDHSGSPQENPF. Basic and acidic residues predominate over residues 13–26; the sequence is EQQKHEEFKHHSTD. The Protein kinase domain occupies 144 to 405; it reads TISAEIIGIG…IHELMATPLV (262 aa). ATP-binding positions include 150–158 and K173; that span reads IGIGESGKV. D266 functions as the Proton acceptor in the catalytic mechanism.

This sequence belongs to the protein kinase superfamily. CAMK Ser/Thr protein kinase family. May interact (via protein kinase domain) with unc-22 (via protein kinase and CRD domains). Requires Mg(2+) as cofactor. In terms of processing, autophosphorylated in vitro. As to expression, expressed in body wall muscles (at protein level). Expressed in intestine.

It is found in the cytoplasm. It localises to the myofibril. The protein resides in the sarcomere. The protein localises to the a band. It catalyses the reaction L-seryl-[protein] + ATP = O-phospho-L-seryl-[protein] + ADP + H(+). The catalysed reaction is L-threonyl-[protein] + ATP = O-phospho-L-threonyl-[protein] + ADP + H(+). Serine/threonine-protein kinase which may play a role in body wall muscle contraction. May phosphorylate unc-22/twitchin. The chain is MAP kinase-activated protein kinase mak-1 from Caenorhabditis elegans.